Reading from the N-terminus, the 374-residue chain is Queuine tRNA-ribosyltransferase (374 aa).

Asp89 (proton acceptor) is an active-site residue. Residues 89–93, Asp143, Gln187, and Gly214 contribute to the substrate site; that span reads DSGGF. The tract at residues 245 to 251 is RNA binding; that stretch reads GVGKPED. The active-site Nucleophile is Asp264. An RNA binding; important for wobble base 34 recognition region spans residues 269 to 273; the sequence is TRNAR. Zn(2+)-binding residues include Cys302, Cys304, Cys307, and His333.

It belongs to the queuine tRNA-ribosyltransferase family. Homodimer. Within each dimer, one monomer is responsible for RNA recognition and catalysis, while the other monomer binds to the replacement base PreQ1. It depends on Zn(2+) as a cofactor.

The catalysed reaction is 7-aminomethyl-7-carbaguanine + guanosine(34) in tRNA = 7-aminomethyl-7-carbaguanosine(34) in tRNA + guanine. The protein operates within tRNA modification; tRNA-queuosine biosynthesis. In terms of biological role, catalyzes the base-exchange of a guanine (G) residue with the queuine precursor 7-aminomethyl-7-deazaguanine (PreQ1) at position 34 (anticodon wobble position) in tRNAs with GU(N) anticodons (tRNA-Asp, -Asn, -His and -Tyr). Catalysis occurs through a double-displacement mechanism. The nucleophile active site attacks the C1' of nucleotide 34 to detach the guanine base from the RNA, forming a covalent enzyme-RNA intermediate. The proton acceptor active site deprotonates the incoming PreQ1, allowing a nucleophilic attack on the C1' of the ribose to form the product. After dissociation, two additional enzymatic reactions on the tRNA convert PreQ1 to queuine (Q), resulting in the hypermodified nucleoside queuosine (7-(((4,5-cis-dihydroxy-2-cyclopenten-1-yl)amino)methyl)-7-deazaguanosine). The polypeptide is Queuine tRNA-ribosyltransferase (Shewanella baltica (strain OS185)).